Consider the following 532-residue polypeptide: Chromobox protein homolog 2 (532 aa).

Residues 1-66 form an involved in the interaction with H3C15 and H3C1 region; that stretch reads MEELSSVGEQ…AFQKKEHEKE (66 aa). Residues 12-70 enclose the Chromo domain; it reads FAAECILSKRLRKGKLEYLVKWRGWSSKHNSWEPEENILDPRLLLAFQKKEHEKEVQNR. A compositionally biased stretch (basic and acidic residues) spans 60-69; the sequence is KKEHEKEVQN. The disordered stretch occupies residues 60–204; that stretch reads KKEHEKEVQN…APASKLPPPL (145 aa). Over residues 70-82 the composition is skewed to basic residues; sequence RKRGKRPRGRPRK. A DNA-binding region (a.T hook) is located at residues 75–87; that stretch reads RPRGRPRKLTAMS. A compositionally biased stretch (low complexity) spans 103 to 119; it reads KSKSSSSSSSSTSSSSS. The span at 128 to 140 shows a compositional bias: basic and acidic residues; that stretch reads LDAKRGPRGRETH. Residues Lys146 and Lys153 each participate in a glycyl lysine isopeptide (Lys-Gly) (interchain with G-Cter in SUMO2) cross-link. Residues 163–168 carry the Nuclear localization signal motif; that stretch reads KRGRKP. Residue Arg247 is modified to Asymmetric dimethylarginine; alternate. Arg247 carries the omega-N-methylarginine; alternate modification. 2 disordered regions span residues 296-348 and 379-493; these read KGEL…PAPT and KGVP…SQDW. Residue Ser302 is modified to Phosphoserine. The segment covering 464-478 has biased composition (low complexity); that stretch reads SSSSDSDPDSASPPS. Polar residues predominate over residues 479 to 493; it reads TGQNPSVSVQTSQDW.

As to quaternary structure, component of a PRC1-like complex. The composition of the PRC1 complex may differ between the PRC1 complex in pluripotent embryonic stem cells containing RNF2, CBX7 and PCGF2, and the PRC1 complex in differentiating cells containing RNF2, CBX2, CBX4 and BMI1. May interact with H3C15, H3C1 and RNF2. Interacts (via chromodomain) with histone H3K9Me3 and H3K27me3.

The protein resides in the nucleus. The protein localises to the chromosome. In terms of biological role, component of a Polycomb group (PcG) multiprotein PRC1-like complex, a complex class required to maintain the transcriptionally repressive state of many genes, including Hox genes, throughout development. PcG PRC1 complex acts via chromatin remodeling and modification of histones; it mediates monoubiquitination of histone H2A 'Lys-119', rendering chromatin heritably changed in its expressibility. Binds to histone H3 trimethylated at 'Lys-9' (H3K9me3) or at 'Lys-27' (H3K27me3). Plays a role in the lineage differentiation of the germ layers in embryonic development. Involved in sexual development, acting as activator of NR5A1 expression. In Homo sapiens (Human), this protein is Chromobox protein homolog 2 (CBX2).